A 237-amino-acid polypeptide reads, in one-letter code: Class B acid phosphatase (237 aa).

The signal sequence occupies residues 1–23 (MRKVTLTLSAIALALSLNGAAMA). The Nucleophile role is filled by Asp-69. The Mg(2+) site is built by Asp-69 and Asp-71. Asp-71 acts as the Proton donor in catalysis. Residues 137-138 (TG) and Lys-177 each bind substrate. Asp-192 contributes to the Mg(2+) binding site.

Belongs to the class B bacterial acid phosphatase family. Homotetramer. It depends on Mg(2+) as a cofactor.

It is found in the periplasm. The catalysed reaction is a phosphate monoester + H2O = an alcohol + phosphate. Dephosphorylates several organic phosphate monoesters. Also has a phosphotransferase activity catalyzing the transfer of low-energy phosphate groups from organic phosphate monoesters to free hydroxyl groups of various organic compounds. In Proteus mirabilis (strain HI4320), this protein is Class B acid phosphatase.